Consider the following 358-residue polypeptide: Heavy metal-associated isoprenylated plant protein 37 (358 aa).

The region spanning 12 to 75 (IQTFSLRVNI…KLVKAGKHAE (64 aa)) is the HMA domain. Positions 23 and 26 each coordinate a metal cation. Disordered stretches follow at residues 100–194 (QKGQ…QNTQ) and 332–358 (QQQS…CNIM). Residues 128–141 (AEEDGDGSEEEDGD) are compositionally biased toward acidic residues. Over residues 148 to 181 (ANQQQQQNVVNAKKNSGGAAMNNGNNGVNAASKK) the composition is skewed to low complexity. Composition is skewed to polar residues over residues 184 to 194 (QKQSNHNQNTQ) and 339 to 358 (HATN…CNIM). A Cysteine methyl ester modification is found at cysteine 355. Residue cysteine 355 is the site of S-farnesyl cysteine attachment. The propeptide at 356–358 (NIM) is removed in mature form.

Belongs to the HIPP family.

Heavy-metal-binding protein. The protein is Heavy metal-associated isoprenylated plant protein 37 of Arabidopsis thaliana (Mouse-ear cress).